The chain runs to 100 residues: NADH-quinone oxidoreductase subunit K 2 (100 aa).

The next 3 helical transmembrane spans lie at 4 to 24 (LWWHISLGVALFVIGAAGVLL), 28 to 48 (ILVVLMSLELLLNSVNINFIA), and 60 to 80 (IFAIFVIAITAAEVAVALGIL).

Belongs to the complex I subunit 4L family. NDH-1 is composed of 14 different subunits. Subunits NuoA, H, J, K, L, M, N constitute the membrane sector of the complex.

The protein resides in the cell inner membrane. It carries out the reaction a quinone + NADH + 5 H(+)(in) = a quinol + NAD(+) + 4 H(+)(out). NDH-1 shuttles electrons from NADH, via FMN and iron-sulfur (Fe-S) centers, to quinones in the respiratory chain. The immediate electron acceptor for the enzyme in this species is believed to be ubiquinone. Couples the redox reaction to proton translocation (for every two electrons transferred, four hydrogen ions are translocated across the cytoplasmic membrane), and thus conserves the redox energy in a proton gradient. This Sinorhizobium fredii (strain NBRC 101917 / NGR234) protein is NADH-quinone oxidoreductase subunit K 2.